Reading from the N-terminus, the 367-residue chain is Anhydro-N-acetylmuramic acid kinase (367 aa).

ATP is bound at residue 13-20; sequence GTSMDGAD.

Belongs to the anhydro-N-acetylmuramic acid kinase family.

The enzyme catalyses 1,6-anhydro-N-acetyl-beta-muramate + ATP + H2O = N-acetyl-D-muramate 6-phosphate + ADP + H(+). The protein operates within amino-sugar metabolism; 1,6-anhydro-N-acetylmuramate degradation. It participates in cell wall biogenesis; peptidoglycan recycling. Catalyzes the specific phosphorylation of 1,6-anhydro-N-acetylmuramic acid (anhMurNAc) with the simultaneous cleavage of the 1,6-anhydro ring, generating MurNAc-6-P. Is required for the utilization of anhMurNAc either imported from the medium or derived from its own cell wall murein, and thus plays a role in cell wall recycling. This is Anhydro-N-acetylmuramic acid kinase from Neisseria meningitidis serogroup A / serotype 4A (strain DSM 15465 / Z2491).